The sequence spans 25 residues: Neuromedin-U-25 (25 aa).

Residue Asn25 is modified to Asparagine amide.

Belongs to the NmU family.

The protein localises to the secreted. In terms of biological role, stimulates uterine smooth muscle contraction and causes selective vasoconstriction. The protein is Neuromedin-U-25 (NMU) of Gallus gallus (Chicken).